Reading from the N-terminus, the 496-residue chain is Glycerol kinase (496 aa).

Position 12 (threonine 12) interacts with ADP. 3 residues coordinate ATP: threonine 12, threonine 13, and serine 14. A sn-glycerol 3-phosphate-binding site is contributed by threonine 12. Arginine 16 lines the ADP pocket. The sn-glycerol 3-phosphate site is built by arginine 82, glutamate 83, and tyrosine 134. Glycerol contacts are provided by arginine 82, glutamate 83, and tyrosine 134. A Phosphohistidine; by HPr modification is found at histidine 230. Aspartate 244 lines the sn-glycerol 3-phosphate pocket. Glycerol is bound by residues aspartate 244 and glutamine 245. ADP is bound by residues threonine 266 and glycine 309. ATP contacts are provided by threonine 266, glycine 309, glutamine 313, and glycine 410. Positions 410 and 414 each coordinate ADP.

This sequence belongs to the FGGY kinase family. Homotetramer and homodimer (in equilibrium). In terms of processing, the phosphoenolpyruvate-dependent sugar phosphotransferase system (PTS), including enzyme I, and histidine-containing protein (HPr) are required for the phosphorylation, which leads to the activation of the enzyme.

The enzyme catalyses glycerol + ATP = sn-glycerol 3-phosphate + ADP + H(+). It participates in polyol metabolism; glycerol degradation via glycerol kinase pathway; sn-glycerol 3-phosphate from glycerol: step 1/1. Activated by phosphorylation and inhibited by fructose 1,6-bisphosphate (FBP). Its function is as follows. Key enzyme in the regulation of glycerol uptake and metabolism. Catalyzes the phosphorylation of glycerol to yield sn-glycerol 3-phosphate. This is Glycerol kinase from Geobacillus sp. (strain WCH70).